Here is a 190-residue protein sequence, read N- to C-terminus: Endo-1,4-beta-xylanase (190 aa).

One can recognise a GH11 domain in the interval 1-190 (QTIGPGTGYS…SSGSASITVS (190 aa)). The Nucleophile role is filled by Glu86. Glu177 acts as the Proton donor in catalysis.

Belongs to the glycosyl hydrolase 11 (cellulase G) family.

The catalysed reaction is Endohydrolysis of (1-&gt;4)-beta-D-xylosidic linkages in xylans.. It participates in glycan degradation; xylan degradation. This Trichoderma harzianum (Hypocrea lixii) protein is Endo-1,4-beta-xylanase.